The primary structure comprises 89 residues: Small ribosomal subunit protein uS14A (89 aa).

The protein belongs to the universal ribosomal protein uS14 family. In terms of assembly, part of the 30S ribosomal subunit. Contacts proteins S3 and S10.

Functionally, binds 16S rRNA, required for the assembly of 30S particles and may also be responsible for determining the conformation of the 16S rRNA at the A site. In Streptococcus agalactiae serotype Ia (strain ATCC 27591 / A909 / CDC SS700), this protein is Small ribosomal subunit protein uS14A.